The sequence spans 460 residues: ATP synthase subunit beta (460 aa).

Position 149–156 (149–156 (GGAGVGKT)) interacts with ATP.

The protein belongs to the ATPase alpha/beta chains family. As to quaternary structure, F-type ATPases have 2 components, CF(1) - the catalytic core - and CF(0) - the membrane proton channel. CF(1) has five subunits: alpha(3), beta(3), gamma(1), delta(1), epsilon(1). CF(0) has three main subunits: a(1), b(2) and c(9-12). The alpha and beta chains form an alternating ring which encloses part of the gamma chain. CF(1) is attached to CF(0) by a central stalk formed by the gamma and epsilon chains, while a peripheral stalk is formed by the delta and b chains.

The protein localises to the cell membrane. The enzyme catalyses ATP + H2O + 4 H(+)(in) = ADP + phosphate + 5 H(+)(out). Its function is as follows. Produces ATP from ADP in the presence of a proton gradient across the membrane. The catalytic sites are hosted primarily by the beta subunits. The protein is ATP synthase subunit beta of Acholeplasma laidlawii (strain PG-8A).